Reading from the N-terminus, the 386-residue chain is 1-deoxy-D-xylulose 5-phosphate reductoisomerase (386 aa).

NADPH contacts are provided by Thr-10, Gly-11, Ser-12, Ile-13, Gly-36, Asn-38, and Asn-122. Lys-123 provides a ligand contact to 1-deoxy-D-xylulose 5-phosphate. NADPH is bound at residue Glu-124. Asp-148 is a binding site for Mn(2+). 1-deoxy-D-xylulose 5-phosphate contacts are provided by Ser-149, Glu-150, Ser-174, and His-197. Glu-150 contacts Mn(2+). NADPH is bound at residue Gly-203. 1-deoxy-D-xylulose 5-phosphate contacts are provided by Ser-210, Asn-215, Lys-216, and Glu-219. Glu-219 lines the Mn(2+) pocket.

The protein belongs to the DXR family. It depends on Mg(2+) as a cofactor. Mn(2+) is required as a cofactor.

The enzyme catalyses 2-C-methyl-D-erythritol 4-phosphate + NADP(+) = 1-deoxy-D-xylulose 5-phosphate + NADPH + H(+). It participates in isoprenoid biosynthesis; isopentenyl diphosphate biosynthesis via DXP pathway; isopentenyl diphosphate from 1-deoxy-D-xylulose 5-phosphate: step 1/6. In terms of biological role, catalyzes the NADPH-dependent rearrangement and reduction of 1-deoxy-D-xylulose-5-phosphate (DXP) to 2-C-methyl-D-erythritol 4-phosphate (MEP). This Geobacter sulfurreducens (strain ATCC 51573 / DSM 12127 / PCA) protein is 1-deoxy-D-xylulose 5-phosphate reductoisomerase.